The sequence spans 231 residues: Phosphatidylserine decarboxylase proenzyme (231 aa).

The active-site Schiff-base intermediate with substrate; via pyruvic acid is the S189. A Pyruvic acid (Ser); by autocatalysis modification is found at S189.

The protein belongs to the phosphatidylserine decarboxylase family. PSD-A subfamily. As to quaternary structure, heterodimer of a large membrane-associated beta subunit and a small pyruvoyl-containing alpha subunit. Requires pyruvate as cofactor. Is synthesized initially as an inactive proenzyme. Formation of the active enzyme involves a self-maturation process in which the active site pyruvoyl group is generated from an internal serine residue via an autocatalytic post-translational modification. Two non-identical subunits are generated from the proenzyme in this reaction, and the pyruvate is formed at the N-terminus of the alpha chain, which is derived from the carboxyl end of the proenzyme. The post-translation cleavage follows an unusual pathway, termed non-hydrolytic serinolysis, in which the side chain hydroxyl group of the serine supplies its oxygen atom to form the C-terminus of the beta chain, while the remainder of the serine residue undergoes an oxidative deamination to produce ammonia and the pyruvoyl prosthetic group on the alpha chain.

The protein localises to the cell membrane. The enzyme catalyses a 1,2-diacyl-sn-glycero-3-phospho-L-serine + H(+) = a 1,2-diacyl-sn-glycero-3-phosphoethanolamine + CO2. It participates in phospholipid metabolism; phosphatidylethanolamine biosynthesis; phosphatidylethanolamine from CDP-diacylglycerol: step 2/2. In terms of biological role, catalyzes the formation of phosphatidylethanolamine (PtdEtn) from phosphatidylserine (PtdSer). In Chelativorans sp. (strain BNC1), this protein is Phosphatidylserine decarboxylase proenzyme.